Reading from the N-terminus, the 421-residue chain is Putative B3 domain-containing protein Os08g0333500 (421 aa).

The segment at residues 1-51 is a DNA-binding region (TF-B3); that stretch reads MTVELEKIAGSFFISKGWKTFVHRTGLLSGQYIRFQVLTPSKINVLLFDKK. The segment at 92 to 121 is disordered; sequence SHTSNKETSSDSRTESMTDIPSSSDNSGET. A compositionally biased stretch (basic and acidic residues) spans 95-107; the sequence is SNKETSSDSRTES. Residues 108–121 are compositionally biased toward polar residues; it reads MTDIPSSSDNSGET.

It localises to the nucleus. The chain is Putative B3 domain-containing protein Os08g0333500 from Oryza sativa subsp. japonica (Rice).